The following is a 355-amino-acid chain: LIM/homeobox protein lim-4 (355 aa).

2 consecutive LIM zinc-binding domains span residues 96–155 (VICT…THVT) and 166–228 (PKCA…LVEG). Positions 239-298 (TKRVRTTFAEDQLSVLQTYFNRDSNPDGADLEKIASMTGLSKRVTQVWFQNSRARQKKWH) form a DNA-binding region, homeobox. Residues 291–336 (RARQKKWHQKSEGDNGDSQRSSVGPSSPSQKSDSSSEMMYPTSVTT) are disordered. Low complexity predominate over residues 306-326 (GDSQRSSVGPSSPSQKSDSSS).

As to quaternary structure, interacts with transcription factor sox-2. In terms of tissue distribution, expressed in the AWB sensory neurons and in one RME motor neuron (RMEV), two RMD motor neurons (RMDL and RMDR), the RID, RIV, SAA and SIA interneurons and the SMB sensory/inter/motor neurons.

Its subcellular location is the nucleus. In terms of biological role, transcription factor that binds to the promoter of target genes. Regulates genes involved in serotonin synthesis and release in serotonergic ADF neurons. Involved in specification of neuron cell fate, olfactory receptor expression, locomotion, and foraging behavior. Required in AWB olfactory neurons to repress AWC cell fate and promote the AWB cell fate during early development. Cooperates with additional factors to direct the differentiation of the olfactory neurons, functioning with the transcription factor sox-2 to suppress AWC terminal differentiation and promote AWB neuron differentiation. Involved in regulating terminal specification and maintenance of the SMB sensory/inter/motor neurons. Plays a role in regulation of RID motor neuron differentiation, but is dispensable for motor axon outgrowth in the dorsal nerve cord. May regulate its own expression. The chain is LIM/homeobox protein lim-4 from Caenorhabditis elegans.